A 446-amino-acid polypeptide reads, in one-letter code: FAD-dependent monooxygenase eupB (446 aa).

A helical transmembrane segment spans residues 10-30 (EPHIAIVGGGIVGVILTLGLL). Asn-33 is a glycosylation site (N-linked (GlcNAc...) asparagine). The FAD site is built by Glu-40, Ala-53, and Arg-125. Catalysis depends on residues Arg-206 and Tyr-239. An N-linked (GlcNAc...) asparagine glycan is attached at Asn-243. The FAD site is built by Asp-322 and Ala-335. An N-linked (GlcNAc...) asparagine glycan is attached at Asn-395.

Belongs to the paxM FAD-dependent monooxygenase family. Requires FAD as cofactor.

The protein localises to the membrane. Its pathway is secondary metabolite biosynthesis; terpenoid biosynthesis. In terms of biological role, FAD-dependent monooxygenase; part of the gene cluster that mediates the biosynthesis of eupenifeldin, a bistropolone meroterpenoid that acts as an antitumor agent. The first step of eupenifeldin biosynthesis is the biosynthesis of 3-methylorcinaldehyde performed by the non-reducing polyketide synthase eupA. Oxidative dearomatization of 3-methylorcinaldehyde likely catalyzed by the FAD-dependent monooxygenase eupB is followed by oxidative ring expansion by the 2-oxoglutarate-dependent dioxygenase eupC to provide the first tropolone metabolite, tropolone stipitaldehyde. In parallel, generation of sesquiterpene alpha-humulene from farnesylpyrophosphate (FPP) is catalyzed by the terpene cyclase eupE. The cytochrome P450 monooxygenase eupD then hydroxylates humulene to humulenol. The putative Diels-Alderase eupF probably catalyzes the formation of the tropolone-humulene skeleton by linking humulenol and the polyketide moiety. The short-chain dehydrogenase/reductase eupG and the flavin-dependent monooxygenase eupH are also essential for eupenifeldin biosynthesis and are likely the additional decorating enzymes of the tropolone-humulene skeleton to produce final eupenifeldin or derivatives. The chain is FAD-dependent monooxygenase eupB from Phoma sp.